We begin with the raw amino-acid sequence, 412 residues long: Nucleoside transporter 1 (412 aa).

Residues 1-21 (MSKIKESSSGILGASNNTNKE) are disordered. Over 1 to 29 (MSKIKESSSGILGASNNTNKESSQKSARS) the chain is Cytoplasmic. The span at 7-21 (SSSGILGASNNTNKE) shows a compositional bias: polar residues. Residues 30–50 (IALPMTYALIGVSCLNVWNSA) traverse the membrane as a helical segment. The Extracellular segment spans residues 51 to 56 (LGLNIK). A helical transmembrane segment spans residues 57-77 (ITYNIFQMAGLLTSSVLALFV). Over 78–81 (NYPR) the chain is Cytoplasmic. The chain crosses the membrane as a helical span at residues 82-102 (VLLPTSLGVLTLLCAGFQIAH). The Extracellular segment spans residues 103 to 114 (QTFSDSAFDTYC). The helical transmembrane segment at 115–135 (LAAFITIGLMAGIAQTIAFAI) threads the bilayer. At 136 to 144 (GTTKESNMS) the chain is on the cytoplasmic side. Residues 145–165 (GYISAGIGMSGVLIFCINLIL) traverse the membrane as a helical segment. Over 166–181 (DYIVSDEKIYEINKSK) the chain is Extracellular. Residues 182–202 (LLCLFSISEIFLIITIVCCVL) traverse the membrane as a helical segment. The Cytoplasmic segment spans residues 203 to 240 (YIDLFPKNDNNKDSTDIEKAEEKEGRLPLIEIIKDGYK). The chain crosses the membrane as a helical span at residues 241 to 261 (AILSIFLVNWLSLQLFPGIGH). Residues 262–271 (KKWQEKHGMT) lie on the Extracellular side of the membrane. The helical transmembrane segment at 272-294 (DNNVTIIVGMFQVFDFISRYPPN) threads the bilayer. The Cytoplasmic portion of the chain corresponds to 295–310 (FTHIKIFKYFTFSLNT). A helical membrane pass occupies residues 311–331 (LLIGNFLRLLFIPWFVLNAVI). Residues 332 to 343 (SSSFFTNIVQQC) are Extracellular-facing. A helical membrane pass occupies residues 344–364 (VCIAALAFTNGWFNTVPFIVF). The Cytoplasmic portion of the chain corresponds to 365–382 (VKELKKVKHQKDIETISR). Residues 383-403 (IMVVSLFFGLFFGMLTTCLYD) form a helical membrane-spanning segment. Over 404–412 (YFPIGILNN) the chain is Extracellular.

This sequence belongs to the SLC29A/ENT transporter (TC 2.A.57) family.

The protein localises to the cell membrane. The catalysed reaction is inosine(in) = inosine(out). The enzyme catalyses adenosine(in) = adenosine(out). It catalyses the reaction hypoxanthine(out) = hypoxanthine(in). It carries out the reaction guanosine(in) = guanosine(out). The catalysed reaction is guanine(out) = guanine(in). The enzyme catalyses thymidine(in) = thymidine(out). It catalyses the reaction uridine(out) = uridine(in). It carries out the reaction uracil(in) = uracil(out). The catalysed reaction is thymine(out) = thymine(in). The enzyme catalyses adenine(out) = adenine(in). It catalyses the reaction cytosine(out) = cytosine(in). It carries out the reaction xanthine(out) = xanthine(in). In terms of biological role, nucleoside and nucleobase transporter with a broad substrate specificity. The sequence is that of Nucleoside transporter 1 from Plasmodium berghei (strain Anka).